The sequence spans 504 residues: WD repeat-containing protein 55 homolog (504 aa).

Disordered regions lie at residues 1–21 (MDRHEHFKAPANEDELDDIDD) and 33–132 (QEVL…DDDD). Composition is skewed to acidic residues over residues 12-21 (NEDELDDIDD) and 33-48 (QEVLNESESDDDEYDL). Low complexity predominate over residues 63–74 (SSSNESISSDGS). The span at 78–89 (NAEDSDSDDSMI) shows a compositional bias: acidic residues. 6 WD repeats span residues 156–195 (KLEDFITDICFHPDRDIIALATIIGDVHLYEYGNEENKLL), 200–239 (VHAKACRDVEFTEDGRSLITCSKDKCVMVTDMETEKLKKL), 243–281 (AHDDAINKLHVLDERLFATGDDAGTVKLWDFRTKDAIFE), 284–323 (EVEDQITQMLTNEQNKLLLATSADGYLTTYNIGARKLYVQ), 326–365 (PYEEELNCMGIYRGSSKLVAGTSKGRLYTYNWGYFGYHCD), and 410–449 (QHNMPIESLDINCSGELLASSSHNNDVRFWNVKYFEDFGD). Residues 477–504 (FFADMTKDQDDDDNDGGNDTAAGPSNVT) are disordered.

Belongs to the WD repeat WDR55 family.

This chain is WD repeat-containing protein 55 homolog, found in Drosophila virilis (Fruit fly).